The following is a 270-amino-acid chain: WGALGHATVAYVAQHYVSPEAASWAQGILGSSSSSYLASIASWADEYRLTSAGKWSASLHFIDAEDNPPTNCNVDYERDCGSSGCSISAIANYTQRVSDSSLSSENHAEALRFLVHFIGDMTQPLHDEAYAVGGNKINVTFDGYHDNLHSDWDTYMPQKLIGGHALSDAESWAKTLVQNIESGNYTAQATGWIKGDNISEPITTATRWASDANALVCTVVMPHGAAALQTGDLYPTYYDSVIDTIELQIAKGGYRLANWINEIHGSEIAK.

Tryptophan 1, histidine 6, histidine 15, aspartate 45, and histidine 60 together coordinate a divalent metal cation. 1 to 6 (WGALGH) serves as a coordination point for substrate. Residues 45–51 (DEYRLTS), 60–63 (HFID), and 73–78 (NVDYER) contribute to the substrate site. Disulfide bonds link cysteine 72/cysteine 217 and cysteine 80/cysteine 85. Asparagine 92 provides a ligand contact to substrate. N-linked (GlcNAc...) asparagine glycosylation is present at asparagine 92. A divalent metal cation is bound by residues histidine 116, aspartate 120, and histidine 126. The tract at residues 116-164 (HFIGDMTQPLHDEAYAVGGNKINVTFDGYHDNLHSDWDTYMPQKLIGGH) is substrate binding. Residue asparagine 138 is glycosylated (N-linked (GlcNAc...) asparagine). A divalent metal cation is bound by residues histidine 149 and aspartate 153. Residues asparagine 184 and asparagine 197 are each glycosylated (N-linked (GlcNAc...) asparagine).

Belongs to the nuclease type I family. Zn(2+) is required as a cofactor.

The protein resides in the secreted. It carries out the reaction a ribonucleoside 3'-phosphate + H2O = a ribonucleoside + phosphate. Hydrolyzes only single-stranded DNA and RNA without apparent specificity for bases. The protein is Nuclease PA3 of Penicillium sp.